Consider the following 344-residue polypeptide: Tripartite motif-containing protein 44 (344 aa).

The segment at 69 to 165 (PPASGDDALP…ETEAESEFDP (97 aa)) is disordered. Acidic residues predominate over residues 88–165 (EGEVESEVGE…ETEAESEFDP (78 aa)). Residues 174-215 (VAKRKCPDHGLDLSTYCQEDRQLICVLCPVIGAHRGHQLSTL) form a B box-type zinc finger. 4 residues coordinate Zn(2+): Cys179, His182, Cys201, and His207. Positions 290–325 (AHVTEILADIQSHMDRLMTQMAQAKEQLDTSNESAE) form a coiled coil. The disordered stretch occupies residues 309-344 (QMAQAKEQLDTSNESAEPKAEGDEEGPSGASEEEDT). The segment covering 330–344 (GDEEGPSGASEEEDT) has biased composition (acidic residues). A phosphoserine mark is found at Ser336 and Ser339.

As to quaternary structure, interacts (via coiled coil) with TRIM17 (via coiled coil).

Its function is as follows. May play a role in the process of differentiation and maturation of neuronal cells. May regulate the activity of TRIM17. Is a negative regulator of PAX6 expression. This is Tripartite motif-containing protein 44 (Trim44) from Rattus norvegicus (Rat).